The primary structure comprises 634 residues: Chaperone protein HtpG (634 aa).

Positions 1–344 are a; substrate-binding; it reads MNETVANNKE…SNDLPLNVSR (344 aa). The interval 345–561 is b; that stretch reads EILQDNKVTQ…DFEMGTQMAK (217 aa). The tract at residues 562–634 is c; that stretch reads LLAAAGQAVP…TAINSLLTKG (73 aa).

This sequence belongs to the heat shock protein 90 family. As to quaternary structure, homodimer.

Its subcellular location is the cytoplasm. Its function is as follows. Molecular chaperone. Has ATPase activity. The sequence is that of Chaperone protein HtpG from Vibrio vulnificus (strain YJ016).